The chain runs to 100 residues: Large ribosomal subunit protein uL23 (100 aa).

Belongs to the universal ribosomal protein uL23 family. Part of the 50S ribosomal subunit. Contacts protein L29, and trigger factor when it is bound to the ribosome.

Functionally, one of the early assembly proteins it binds 23S rRNA. One of the proteins that surrounds the polypeptide exit tunnel on the outside of the ribosome. Forms the main docking site for trigger factor binding to the ribosome. In Shewanella halifaxensis (strain HAW-EB4), this protein is Large ribosomal subunit protein uL23.